A 221-amino-acid polypeptide reads, in one-letter code: Cytidylate kinase (221 aa).

Position 11–19 (11–19 (GPTASGKGT)) interacts with ATP.

This sequence belongs to the cytidylate kinase family. Type 1 subfamily.

It is found in the cytoplasm. It carries out the reaction CMP + ATP = CDP + ADP. The enzyme catalyses dCMP + ATP = dCDP + ADP. In Cupriavidus pinatubonensis (strain JMP 134 / LMG 1197) (Cupriavidus necator (strain JMP 134)), this protein is Cytidylate kinase.